The following is a 236-amino-acid chain: Orotidine 5'-phosphate decarboxylase (236 aa).

Residues Asp17, Lys39, 66–75, Thr125, Arg186, Gln195, Gly215, and Arg216 contribute to the substrate site; that span reads DLKFHDIPNT. The Proton donor role is filled by Lys68.

This sequence belongs to the OMP decarboxylase family. Type 1 subfamily. In terms of assembly, homodimer.

It carries out the reaction orotidine 5'-phosphate + H(+) = UMP + CO2. The protein operates within pyrimidine metabolism; UMP biosynthesis via de novo pathway; UMP from orotate: step 2/2. Its function is as follows. Catalyzes the decarboxylation of orotidine 5'-monophosphate (OMP) to uridine 5'-monophosphate (UMP). In Buchnera aphidicola subsp. Acyrthosiphon pisum (strain 5A), this protein is Orotidine 5'-phosphate decarboxylase.